Here is a 298-residue protein sequence, read N- to C-terminus: Cyanophycinase (298 aa).

Catalysis depends on charge relay system residues Ser-155, Glu-173, and His-197.

This sequence belongs to the peptidase S51 family.

The enzyme catalyses [L-4-(L-arginin-2-N-yl)aspartate](n) + H2O = [L-4-(L-arginin-2-N-yl)aspartate](n-1) + L-4-(L-arginin-2-N-yl)aspartate. Functionally, exopeptidase that catalyzes the hydrolytic cleavage of multi-L-arginyl-poly-L-aspartic acid (cyanophycin; a water-insoluble reserve polymer) into aspartate-arginine dipeptides. The sequence is that of Cyanophycinase (cphB) from Nostoc sp. (strain PCC 7120 / SAG 25.82 / UTEX 2576).